A 256-amino-acid polypeptide reads, in one-letter code: uncharacterized protein (256 aa).

2 disordered regions span residues 1 to 38 (MGKT…PNRD) and 51 to 75 (PRPS…RCPQ).

This is an uncharacterized protein from Homo sapiens (Human).